The sequence spans 611 residues: Dihydroxy-acid dehydratase (611 aa).

Asp81 is a Mg(2+) binding site. A [2Fe-2S] cluster-binding site is contributed by Cys122. Mg(2+) is bound by residues Asp123 and Lys124. Position 124 is an N6-carboxylysine (Lys124). Position 195 (Cys195) interacts with [2Fe-2S] cluster. Glu491 provides a ligand contact to Mg(2+). Ser517 serves as the catalytic Proton acceptor.

This sequence belongs to the IlvD/Edd family. In terms of assembly, homodimer. Requires [2Fe-2S] cluster as cofactor. Mg(2+) is required as a cofactor.

The catalysed reaction is (2R)-2,3-dihydroxy-3-methylbutanoate = 3-methyl-2-oxobutanoate + H2O. The enzyme catalyses (2R,3R)-2,3-dihydroxy-3-methylpentanoate = (S)-3-methyl-2-oxopentanoate + H2O. It participates in amino-acid biosynthesis; L-isoleucine biosynthesis; L-isoleucine from 2-oxobutanoate: step 3/4. Its pathway is amino-acid biosynthesis; L-valine biosynthesis; L-valine from pyruvate: step 3/4. In terms of biological role, functions in the biosynthesis of branched-chain amino acids. Catalyzes the dehydration of (2R,3R)-2,3-dihydroxy-3-methylpentanoate (2,3-dihydroxy-3-methylvalerate) into 2-oxo-3-methylpentanoate (2-oxo-3-methylvalerate) and of (2R)-2,3-dihydroxy-3-methylbutanoate (2,3-dihydroxyisovalerate) into 2-oxo-3-methylbutanoate (2-oxoisovalerate), the penultimate precursor to L-isoleucine and L-valine, respectively. This chain is Dihydroxy-acid dehydratase, found in Agrobacterium fabrum (strain C58 / ATCC 33970) (Agrobacterium tumefaciens (strain C58)).